The sequence spans 170 residues: Co-chaperone protein HscB homolog (170 aa).

The region spanning 5–79 is the J domain; that stretch reads DHFSLFGLPA…RARYLCEQAG (75 aa).

This sequence belongs to the HscB family. Interacts with HscA and stimulates its ATPase activity.

In terms of biological role, co-chaperone involved in the maturation of iron-sulfur cluster-containing proteins. Seems to help targeting proteins to be folded toward HscA. The sequence is that of Co-chaperone protein HscB homolog from Bordetella parapertussis (strain 12822 / ATCC BAA-587 / NCTC 13253).